The sequence spans 918 residues: Pre-pro-metalloprotease PrtV (918 aa).

Residues 1–23 (MKTIKKTLLAAAIASFFSSGLYA) form the signal peptide. The propeptide occupies 24–105 (QTPIDLGVVN…QKGPHKARVF (82 aa)). H330 contacts Zn(2+). Residue E331 is part of the active site. H334 contacts Zn(2+). Residues I757, D782, D821, and D825 each coordinate Ca(2+). PKD domains lie at 758 to 835 (APVA…TIKV) and 855 to 918 (VTMW…KVKL). Positions 835 to 918 (VDTPNALPQA…VTTITIKVKL (84 aa)) are excised as a propeptide.

It belongs to the peptidase M6 family. The cofactor is Zn(2+). PrtV is expressed as an inactive, multidomain, 102 kDa pre-pro-metalloprotease. To form a catalytically active protease, PrtV is first secreted, and then it undergoes N- and C-terminal cleavages during envelope translocation to yield a 81 kDa pro-metalloprotease. Outside the cell, the 81 kDa pro-metalloprotease undergoes an auto-cleavage. The two major products of autoproteolysis (37 kDa and 18 kDa) together form the so called 55 kDa active complex.

Its subcellular location is the secreted. Its activity is regulated as follows. Calcium plays an important structural role, providing stability to this protein in the cytoplasm. Outside the cell, the decrease of the calcium concentration triggers the autoproteolysis. PrtV activity is increased by 25 mM of Sr(2+) or Mg(2+) and to some extent by Ba(2+); however, Ba(2+) inhibits PrtV at higher concentrations. Completely inhibited by EDTA and 1,10-phenanthroline. Functionally, metalloprotease that exhibits a cytotoxic effect leading to cell death. In host tissues, it could play a role in pathogenesis by modulating the stability of the extracellular matrix components such as fibronectin and fibrinogen. Also able to cleave plasminogen. The chain is Pre-pro-metalloprotease PrtV from Vibrio cholerae serotype O1 (strain ATCC 39315 / El Tor Inaba N16961).